The sequence spans 271 residues: 5'-nucleotidase SurE (271 aa).

Residues D14, D15, S46, and N104 each coordinate a divalent metal cation.

This sequence belongs to the SurE nucleotidase family. It depends on a divalent metal cation as a cofactor.

Its subcellular location is the cytoplasm. It catalyses the reaction a ribonucleoside 5'-phosphate + H2O = a ribonucleoside + phosphate. Functionally, nucleotidase that shows phosphatase activity on nucleoside 5'-monophosphates. In Gloeothece citriformis (strain PCC 7424) (Cyanothece sp. (strain PCC 7424)), this protein is 5'-nucleotidase SurE.